The following is a 100-amino-acid chain: Small ribosomal subunit protein uS14c (100 aa).

Belongs to the universal ribosomal protein uS14 family. Part of the 30S ribosomal subunit.

Its subcellular location is the plastid. The protein localises to the chloroplast. Binds 16S rRNA, required for the assembly of 30S particles. This Psilotum nudum (Whisk fern) protein is Small ribosomal subunit protein uS14c.